We begin with the raw amino-acid sequence, 207 residues long: Glycerol-3-phosphate acyltransferase (207 aa).

The next 6 membrane-spanning stretches (helical) occupy residues 8–28 (NIVFYLLAYLIGSIPFGLILA), 64–84 (LGIATVLLDALKGTLVLLVGI), 92–112 (TLWAIAVLAVLGHCYSIYLGL), 122–142 (LGVYIVLIPYSTLIGAVVWIV), 154–174 (SLLGLIAAVISAIFIYNGLGI), and 176–196 (SNIPMYLIAFIILYKHIPNIV).

It belongs to the PlsY family. In terms of assembly, probably interacts with PlsX.

The protein localises to the cell inner membrane. It carries out the reaction an acyl phosphate + sn-glycerol 3-phosphate = a 1-acyl-sn-glycero-3-phosphate + phosphate. The protein operates within lipid metabolism; phospholipid metabolism. Its function is as follows. Catalyzes the transfer of an acyl group from acyl-phosphate (acyl-PO(4)) to glycerol-3-phosphate (G3P) to form lysophosphatidic acid (LPA). This enzyme utilizes acyl-phosphate as fatty acyl donor, but not acyl-CoA or acyl-ACP. The polypeptide is Glycerol-3-phosphate acyltransferase (Aliarcobacter butzleri (strain RM4018) (Arcobacter butzleri)).